A 362-amino-acid polypeptide reads, in one-letter code: MTGLLLKDIRKSYGAVDVIHGIDLDIKEGEFVVFVGPSGCGKSTLLRMIAGLEEITGGDMFIDGERVNDVPPSKRGIAMVFQSYALYPHMTVYDNMAFGMRIARESKEEIDRRVRGAADMLQLTPYLDRLPKALSGGQRQRVAIGRAICRNPKVFLFDEPLSNLDAALRVATRIEIAKLSERMSDTTMIYVTHDQVEAMTLADRIVVLSAGHIEQVGAPLELYERPANLFVARFIGSPAMNVIPATITATGQQTAVSLAGGKSVTLDVPTNASENGKTASFGVRPEDLRVTEADDFLFEGTVSIVEALGEVTLLYIEGLVENEPIIAKMPGIARVGRGDKVRFTADKAKLHLFDTNGQSYRA.

Residues Leu-4 to Ile-235 form the ABC transporter domain. An ATP-binding site is contributed by Gly-36–Ser-43.

Belongs to the ABC transporter superfamily.

Its subcellular location is the cell inner membrane. Its function is as follows. Part of the binding-protein-dependent transport system for alpha-glucosides such as sucrose, maltose and trehalose. Probably responsible for energy coupling to the transport system. The polypeptide is Alpha-glucoside transport ATP-binding protein AglK (aglK) (Rhizobium meliloti (strain 1021) (Ensifer meliloti)).